Here is a 151-residue protein sequence, read N- to C-terminus: 3-hydroxyacyl-thioester dehydratase Z (151 aa).

Residues 11-131 enclose the MaoC-like domain; it reads AAAAGEKVGQ…TVQATVSTTV (121 aa). Residues 60–63, 86–89, 97–99, Gln-124, and Arg-148 each bind substrate; these read IAHG, AINY, and PAP.

The protein belongs to the enoyl-CoA hydratase/isomerase family. Homodimer.

It catalyses the reaction a (3R)-3-hydroxyacyl-CoA = a (2E)-enoyl-CoA + H2O. Shows trans-enoyl-CoA hydratase/3-hydroxyacyl-CoA dehydratase activity. This is 3-hydroxyacyl-thioester dehydratase Z from Mycobacterium bovis (strain ATCC BAA-935 / AF2122/97).